The primary structure comprises 425 residues: Divalent metal cation transporter MntH (425 aa).

11 helical membrane-spanning segments follow: residues 30 to 50, 61 to 81, 107 to 127, 134 to 154, 167 to 187, 209 to 231, 255 to 275, 294 to 314, 344 to 364, 365 to 385, and 401 to 421; these read LLPF…PGNF, GYML…IQSL, IGLW…EFIG, LLFG…SFAI, AGIA…TFFA, VLLA…HSAL, ILIA…VAAA, FGHL…LVAG, FITI…TTAL, VLSQ…LIMF, and ITVV…FLIV.

The protein belongs to the NRAMP family.

The protein localises to the cell membrane. Its function is as follows. H(+)-stimulated, divalent metal cation uptake system. Involved in manganese uptake. Can probably also transport cadmium, cobalt, copper and zinc, but not iron. May be the predominant transporter of manganese during logarithmic phase growth. In Bacillus subtilis (strain 168), this protein is Divalent metal cation transporter MntH.